The following is a 431-amino-acid chain: MQNIHFIGIGGIGISALARFLKEKGFKISGSDLKESKITKELEKEGVKVSIPHHKDNILNKDLVIYSAAIKEENPEFKHAKELGIKCLSRKEALPLILEDKRVFAVAGAHGKSTTSSILASLLDDASVIIGAILKEFGSNMIYKESQNLVFEADESDSSFLNSNPYLAIVTNAEAEHLDHYGNEVSKLHHAYTQFLDVAKIRVINAEDEFLKNYKNESIKLYPSKDIKNCTMCIENFKPFTSFELKDLGEFKVFGMGYHLALDASLAILAALNFLDIETIRTRLKNYQGIKKRFDILHADENLVLIDDYGHHPTEIKATLSAAQEYAKLGGYKKITAIFEPHRYTRLAANLKEFAKAFEGVDELVILPVYAAGEEPIELDLKAVFPKALFVEDIKREGKFLVASKGQVFEEGLIIGFGAGDISNKLRQKNE.

Position 108–114 (108–114) interacts with ATP; the sequence is GAHGKST.

Belongs to the MurCDEF family.

Its subcellular location is the cytoplasm. It catalyses the reaction UDP-N-acetyl-alpha-D-muramate + L-alanine + ATP = UDP-N-acetyl-alpha-D-muramoyl-L-alanine + ADP + phosphate + H(+). It participates in cell wall biogenesis; peptidoglycan biosynthesis. Its function is as follows. Cell wall formation. This is UDP-N-acetylmuramate--L-alanine ligase from Campylobacter jejuni subsp. jejuni serotype O:6 (strain 81116 / NCTC 11828).